A 1188-amino-acid polypeptide reads, in one-letter code: MENLPFPLKLLSASSLNTPSSTPWVLDIFLTLVFALGLFFLLLPYFSYLRCDNPPSPSPRKRKRHLVSQRHLVSQCPTGRRGRPRGRMKNHSLRACRECPRGLEETWDLLSQLQSLLGPHLEKGDFGQLSGPDPPGEVGKRTPDGASRSSHEPMEDAAPIVSPLASPDPRTKHPQDLASTPPPGPMTTSVSSLSASQPPEPSLLLERPSPEPPALFPHPPHTPDPLACSPPPPKGFTPPPLRDSTLLTPSHCDSVALPLDTVPQSLSPREDLAASVPAISGLGGSNSQVSALSWSQETTKTWCIFNSSVQQDHLSRQRDTTMSPLLFQAQPLSHLGPESQPFISSTPQFRPTPMAQAEAQAHLQSSFPVLSPAFLSPMKNTGVACPASQNKVQALSLPETQHPERPLLRKQLEGGLALPSRVQKSQDVFSVSTPNLPQERLTSILPENFPVSPELWRQLEQYMGQRGRIQESLDLMQLQDELPGTSQAKGKPRPWQSSTSTGESSKEAQTVKFQLERDPCPHLGQILGETPQNLSRGMESFPGKVLGATSEESERNLRKPLRSDSGSDLLRRTERNHIENILKAHMGRKLGQTNEGLIPVSVRRSWLAVNQAFPVSNTHVKTSNLAAPKSRKACVNTAQVLSFLELCTQQVLEAHIVRFWAKHRWGLPLRVLKPIQCFQLEKVSSLSLIQLAGPSSDTCESGAGSKVEVATLLGEPPMASLRKQVLTKPSVHMPERLQASSPACKQFQRAPRGIPSSNDHGSLKAPTAGQEGRWPSKPLTYSLKGSTQQSRSLGAQSSRAGETREAVPQPTVPLGTCMRANLQATSEDVRGFKAPGASKSSLLPRMSVSQDPRKLCLMEEAVSEFEPGMATKSETQPQVSAAVVLLPDGQASVVPHASENLASQVPQGHLQSTPTGNMQASQELCDLMSARRSNMGHKEPRNPNCQGSCKSQSPMFPPTHKRENSRKPNLEKHEEMFQGLRTPQLTPGRKTEDTRQNEGVQLLPSKKQPPSISHFGENIKQFFETIFSKKERKPAPVTAESQKTVKNRSCVYGSSAEAERLMTAVGQIPEENMSLCHARHASKVNQQRQQFQAPVCGFPCNHRHPFYSDHSRMLSYAASSQQATLKNQSRPNRDRQIRDQQPLKSVRCNNEQWGLRHPQLLLPKKAVSPVSPPQHRPKTPSASSHHHH.

Residues 23–43 (PWVLDIFLTLVFALGLFFLLL) form a helical membrane-spanning segment. Disordered stretches follow at residues 57-92 (PSPR…KNHS), 121-249 (LEKG…LLTP), 483-510 (PGTS…EAQT), 530-567 (TPQN…DSGS), 733-813 (MPER…PTVP), 934-1013 (NMGH…PSIS), 1121-1143 (QQAT…QQPL), and 1155-1188 (LRHP…HHHH). Composition is skewed to basic residues over residues 59–68 (PRKRKRHLVS) and 80–92 (RRGR…KNHS). The span at 138-154 (VGKRTPDGASRSSHEPM) shows a compositional bias: basic and acidic residues. The segment covering 191 to 207 (SSLSASQPPEPSLLLER) has biased composition (low complexity). Residues 210 to 241 (PEPPALFPHPPHTPDPLACSPPPPKGFTPPPL) are compositionally biased toward pro residues. Residues 495–510 (WQSSTSTGESSKEAQT) are compositionally biased toward polar residues. Composition is skewed to polar residues over residues 783–800 (LKGS…SSRA) and 943–954 (PNCQGSCKSQSP). Over residues 960 to 976 (HKRENSRKPNLEKHEEM) the composition is skewed to basic and acidic residues. Polar residues predominate over residues 1121–1130 (QQATLKNQSR).

Belongs to the SPATA31 family.

The protein resides in the membrane. Its function is as follows. May play a role in spermatogenesis. This is Spermatogenesis-associated protein 31C1 (SPATA31C1) from Homo sapiens (Human).